Reading from the N-terminus, the 285-residue chain is Bifunctional protein FolD (285 aa).

NADP(+) is bound by residues 165-167 (GRG), Thr-192, and Val-233.

It belongs to the tetrahydrofolate dehydrogenase/cyclohydrolase family. As to quaternary structure, homodimer.

The catalysed reaction is (6R)-5,10-methylene-5,6,7,8-tetrahydrofolate + NADP(+) = (6R)-5,10-methenyltetrahydrofolate + NADPH. It carries out the reaction (6R)-5,10-methenyltetrahydrofolate + H2O = (6R)-10-formyltetrahydrofolate + H(+). The protein operates within one-carbon metabolism; tetrahydrofolate interconversion. Catalyzes the oxidation of 5,10-methylenetetrahydrofolate to 5,10-methenyltetrahydrofolate and then the hydrolysis of 5,10-methenyltetrahydrofolate to 10-formyltetrahydrofolate. This chain is Bifunctional protein FolD, found in Mycobacterium sp. (strain MCS).